The chain runs to 512 residues: Glutathione-binding protein GsiB (512 aa).

The signal sequence occupies residues 1–26; the sequence is MARAVHRSGLVALGIATALMASCAFA.

The protein belongs to the bacterial solute-binding protein 5 family. In terms of assembly, the complex is composed of two ATP-binding proteins (GsiA), two transmembrane proteins (GsiC and GsiD) and a solute-binding protein (GsiB).

It is found in the periplasm. Its function is as follows. Part of the ABC transporter complex GsiABCD involved in glutathione import. Binds glutathione. This Shigella boydii serotype 4 (strain Sb227) protein is Glutathione-binding protein GsiB.